Consider the following 607-residue polypeptide: Fatty acid amide hydrolase (607 aa).

Active-site charge relay system residues include Lys-205 and Ser-281. 302 to 305 serves as a coordination point for substrate; that stretch reads GGGS. Residue Ser-305 is the Acyl-ester intermediate of the active site.

The protein belongs to the amidase family. In terms of assembly, forms homodimers. Expressed in roots, leaves and flowers. Expressed in seedlings, flowers, roots, siliques, seeds and leaves.

The protein localises to the endoplasmic reticulum membrane. Its subcellular location is the cell membrane. It catalyses the reaction N-(5Z,8Z,11Z,14Z-eicosatetraenoyl)-ethanolamine + H2O = ethanolamine + (5Z,8Z,11Z,14Z)-eicosatetraenoate. The enzyme catalyses N-(9Z,12Z-octadecadienoyl)-ethanolamine + H2O = ethanolamine + (9Z,12Z)-octadecadienoate. It carries out the reaction N-hexadecanoylethanolamine + H2O = ethanolamine + hexadecanoate. The catalysed reaction is N-tetradecanoylethanolamine + H2O = tetradecanoate + ethanolamine. It catalyses the reaction N-dodecanoylethanolamine + H2O = dodecanoate + ethanolamine. With respect to regulation, inhibited by methyl arachidonyl fluorophosphonate (MAFP). Catalyzes the hydrolysis of bioactive endogenous fatty acid amides to their corresponding acids. The hydrolysis of endogenous amidated lipids terminates their participation as lipid mediators in various signaling systems. Converts a wide range of N-acylethanolamines (NAEs) to their corresponding free fatty acids and ethanolamine. Can use oleamide as substrate, but not indole-3-acetamide, 1-naphtalene-acetamide, nicotinic acid amide or L-asparagine. Can use 2-arachidonylglycerol as substrate. Participates in the regulation of plant growth. Hydrolyzes N-dodecanoylethanolamine, which is has a growth inhibitory effect on seedling growth. Involved in plant defense signaling. Involved in abscisic acid (ABA) signaling through mechanisms that are independent of the catalytic activity. Involved in the regulation of flowering time. Catalyzes the hydrolysis of N-acyl L-homoserine lactones (AHLs), which are a class of signaling molecules produced by bacteria for quorum sensing. Accumulation of L-homoserine appears to encourage plant growth at low concentrations by stimulating transpiration, but higher concentrations inhibit growth by stimulating ethylene production. The sequence is that of Fatty acid amide hydrolase from Arabidopsis thaliana (Mouse-ear cress).